The following is a 232-amino-acid chain: Fibrillarin-like rRNA/tRNA 2'-O-methyltransferase (232 aa).

S-adenosyl-L-methionine is bound by residues 89 to 90 (TT), 108 to 109 (EF), 133 to 134 (DA), and 153 to 156 (DIAQ).

It belongs to the methyltransferase superfamily. Fibrillarin family. As to quaternary structure, interacts with nop5. Component of box C/D small ribonucleoprotein (sRNP) particles that contain rpl7ae, FlpA and nop5, plus a guide RNA.

Involved in pre-rRNA and tRNA processing. Utilizes the methyl donor S-adenosyl-L-methionine to catalyze the site-specific 2'-hydroxyl methylation of ribose moieties in rRNA and tRNA. Site specificity is provided by a guide RNA that base pairs with the substrate. Methylation occurs at a characteristic distance from the sequence involved in base pairing with the guide RNA. The protein is Fibrillarin-like rRNA/tRNA 2'-O-methyltransferase of Saccharolobus islandicus (strain L.S.2.15 / Lassen #1) (Sulfolobus islandicus).